The primary structure comprises 607 residues: Oligoendopeptidase F homolog (607 aa).

H384 contacts Zn(2+). Residue E385 is part of the active site. 2 residues coordinate Zn(2+): H388 and H391.

This sequence belongs to the peptidase M3B family. Zn(2+) serves as cofactor.

In Mycoplasma genitalium (strain ATCC 33530 / DSM 19775 / NCTC 10195 / G37) (Mycoplasmoides genitalium), this protein is Oligoendopeptidase F homolog (pepF).